We begin with the raw amino-acid sequence, 641 residues long: Probable potassium transport system protein Kup (641 aa).

Positions 1-14 are enriched in polar residues; it reads MALDSESSASNRQG. The tract at residues 1–20 is disordered; that stretch reads MALDSESSASNRQGSRNEQD. 12 helical membrane passes run 29-49, 69-89, 120-140, 156-176, 188-208, 236-256, 267-287, 307-327, 355-375, 384-404, 410-430, and 437-457; these read LCLT…LYAF, ILSL…LLII, VLIV…MITP, PQLT…LFMV, FGPI…NGII, VLGG…DMGH, FALV…LLLL, LVGL…SGVF, VYVP…VLHF, AFGI…FFVM, WNIL…LAFF, and ITDG…LMIT.

Belongs to the HAK/KUP transporter (TC 2.A.72) family.

Its subcellular location is the cell inner membrane. The catalysed reaction is K(+)(in) + H(+)(in) = K(+)(out) + H(+)(out). Transport of potassium into the cell. Likely operates as a K(+):H(+) symporter. The sequence is that of Probable potassium transport system protein Kup from Nitrosomonas eutropha (strain DSM 101675 / C91 / Nm57).